The sequence spans 330 residues: Polyprenol dehydrogenase (330 aa).

Positions 55, 208, 212, and 245 each coordinate NAD(+). Y208 serves as the catalytic Proton acceptor.

It belongs to the short-chain dehydrogenases/reductases (SDR) family. In terms of tissue distribution, widely expressed. Highly expressed in the pancreas.

It is found in the lipid droplet. Its subcellular location is the secreted. It catalyses the reaction a di-trans,poly-cis-polyprenol + NAD(+) = a di-trans,poly-cis-polyprenal + NADH + H(+). The enzyme catalyses a di-trans,poly-cis-polyprenol + NADP(+) = a di-trans,poly-cis-polyprenal + NADPH + H(+). The catalysed reaction is a di-trans,poly-cis-dolichol + NADP(+) = a di-trans,poly-cis-dolichal + NADPH + H(+). It carries out the reaction a di-trans,poly-cis-dolichol + NAD(+) = a di-trans,poly-cis-dolichal + NADH + H(+). It functions in the pathway protein modification; protein glycosylation. In terms of biological role, oxidoreductase that plays a key role in early steps of protein N-linked glycosylation by mediating two non-consecutive steps in dolichol biosynthesis. Acts both as a NAD(+)-dependent dehydrogenase and as a NADPH-dependent reductase during the conversion of polyprenol into dolichol. First catalyzes the NAD(+)-dependent dehydrogenation of polyprenol into polyprenal; polyprenal is then reduced into dolichal by SRD5A3. It then catalyzes the NADPH-dependent reduction of dolichal into dolichol. May also acts as a positive regulator of starvation-induced autophagy. This chain is Polyprenol dehydrogenase, found in Homo sapiens (Human).